A 427-amino-acid chain; its full sequence is CD209 antigen (427 aa).

At 1–37 the chain is on the cytoplasmic side; the sequence is MSDSKEPRLQQLGLLEEEQLRGLGFRQTRGYKSLAGC. Short sequence motifs (endocytosis signal) lie at residues 14 to 15, 16 to 18, and 31 to 34; these read LL, EEE, and YKSL. The helical; Signal-anchor for type II membrane protein transmembrane segment at 38–58 threads the bilayer; it reads LGHGPLVLQLLSFTLLAALLV. Residues 59–427 are Extracellular-facing; sequence QVSKVPSSIS…ASATPNPPPE (369 aa). N-linked (GlcNAc...) asparagine glycosylation occurs at N80. Tandem repeats lie at residues 96–118, 119–141, 142–164, 165–187, 188–210, 211–233, 234–256, and 257–280. Residues 96-280 form an 8 X approximate tandem repeats region; sequence KLQEIYQELT…AVERLCRRCP (185 aa). 3 cysteine pairs are disulfide-bonded: C279-C290, C307-C400, and C379-C392. The region spanning 286–401 is the C-type lectin domain; that stretch reads FQGNCYFMSN…CNLAKFWICK (116 aa). Positions 370, 372, 374, 377, 388, and 389 each coordinate Ca(2+).

In terms of assembly, homotetramer. Interacts with C1QBP; the interaction is indicative for a C1q:C1QBP:CD209 signaling complex. Interacts with ICAM2 and ICAM3 by binding to mannose-like carbohydrates. Interacts (via C-type lectin domain) with CEACAM1 (via Lewis X moieties); this interaction is regulated by the glycosylation pattern of CEACAM1 on cell types and regulates contact between dendritic cells and neutrophils.

It localises to the membrane. Pathogen-recognition receptor expressed on the surface of immature dendritic cells (DCs) and involved in initiation of primary immune response. Thought to mediate the endocytosis of pathogens which are subsequently degraded in lysosomal compartments. The receptor returns to the cell membrane surface and the pathogen-derived antigens are presented to resting T-cells via MHC class II proteins to initiate the adaptive immune response. Probably recognizes in a calcium-dependent manner high mannose N-linked oligosaccharides in a variety of pathogen antigens. In terms of biological role, on DCs it is a high affinity receptor for ICAM2 and ICAM3 by binding to mannose-like carbohydrates. May act as a DC rolling receptor that mediates transendothelial migration of DC presursors from blood to tissues by binding endothelial ICAM2. Seems to regulate DC-induced T-cell proliferation by binding to ICAM3 on T-cells in the immunological synapse formed between DC and T-cells. This is CD209 antigen (CD209) from Gorilla gorilla gorilla (Western lowland gorilla).